Consider the following 159-residue polypeptide: Ribosome maturation factor RimP (159 aa).

Belongs to the RimP family.

The protein resides in the cytoplasm. Its function is as follows. Required for maturation of 30S ribosomal subunits. This is Ribosome maturation factor RimP from Lacticaseibacillus casei (strain BL23) (Lactobacillus casei).